The primary structure comprises 127 residues: Protein ApaG (127 aa).

The ApaG domain occupies Asp-3 to His-127.

The sequence is that of Protein ApaG from Xanthomonas axonopodis pv. citri (strain 306).